Reading from the N-terminus, the 378-residue chain is Glutamate 5-kinase (378 aa).

Lys-20 contacts ATP. 3 residues coordinate substrate: Ser-60, Asp-147, and Asn-159. Residues 179-180 and 221-227 contribute to the ATP site; these read TD and TGGMLTK. The PUA domain occupies 286 to 364; sequence RGRVVLDDGA…SQIARILGSM (79 aa).

This sequence belongs to the glutamate 5-kinase family.

It localises to the cytoplasm. The enzyme catalyses L-glutamate + ATP = L-glutamyl 5-phosphate + ADP. Its pathway is amino-acid biosynthesis; L-proline biosynthesis; L-glutamate 5-semialdehyde from L-glutamate: step 1/2. Catalyzes the transfer of a phosphate group to glutamate to form L-glutamate 5-phosphate. The polypeptide is Glutamate 5-kinase (Bordetella parapertussis (strain 12822 / ATCC BAA-587 / NCTC 13253)).